Reading from the N-terminus, the 561-residue chain is Formate--tetrahydrofolate ligase (561 aa).

70–77 (TPAGEGKT) contributes to the ATP binding site.

Belongs to the formate--tetrahydrofolate ligase family.

It catalyses the reaction (6S)-5,6,7,8-tetrahydrofolate + formate + ATP = (6R)-10-formyltetrahydrofolate + ADP + phosphate. Its pathway is one-carbon metabolism; tetrahydrofolate interconversion. The sequence is that of Formate--tetrahydrofolate ligase from Pelagibacter ubique (strain HTCC1062).